Consider the following 881-residue polypeptide: Nitrate reductase [NADH] 1 (881 aa).

Residues 1-46 are disordered; it reads MAASVEHRPFTSHQHGVVRSFKSYPDVPRPKKLPLPQPLSDSTNDN. Cysteine 167 contributes to the Mo-molybdopterin binding site. Residues 515-590 enclose the Cytochrome b5 heme-binding domain; the sequence is TKSYSLSEVR…LEDYRIGELM (76 aa). The heme site is built by histidine 550 and histidine 573. Residues 625 to 737 enclose the FAD-binding FR-type domain; sequence REKIPCKLLS…KGPLGHIEYT (113 aa). Residues 677–680, 694–698, phenylalanine 699, phenylalanine 706, 711–713, and threonine 764 each bind FAD; these read RAYT, VVKVY, and IMS.

The protein belongs to the nitrate reductase family. As to quaternary structure, homodimer. Requires FAD as cofactor. Heme serves as cofactor. The cofactor is Mo-molybdopterin.

It carries out the reaction nitrite + NAD(+) + H2O = nitrate + NADH + H(+). Functionally, nitrate reductase is a key enzyme involved in the first step of nitrate assimilation in plants, fungi and bacteria. The chain is Nitrate reductase [NADH] 1 (NIA1) from Phaseolus vulgaris (Kidney bean).